The following is a 1249-amino-acid chain: Clustered mitochondria protein homolog (1249 aa).

Residues 1–34 (MAQTNGELEHSKAETPEQLTNGNHPEETQEEEQN) are disordered. Positions 321 to 565 (DITRSQENYL…RVTPLDVMWQ (245 aa)) constitute a Clu domain. Disordered regions lie at residues 610–638 (VETASKEKSEENAESKEEGSEEKSEEALD) and 874–907 (VPATNGASQEEGKKKKKKGGDSKSPARAASPEKP). Residues 613-638 (ASKEKSEENAESKEEGSEEKSEEALD) show a composition bias toward basic and acidic residues. TPR repeat units lie at residues 975–1008 (AKLYHQLSMLYYQTDEKEAAVELARKAVIVTERT), 1017–1050 (ILSYLNLSLFEHASGNTKTALVYIKHAMDLWKII), and 1059–1092 (ITTMNNAAVMLQHLKQYSDSRKWFEASLTVCESL). Over residues 1178–1191 (TRTLGTKVQPQVGQ) the composition is skewed to polar residues. The segment at 1178–1249 (TRTLGTKVQP…KLRGSKKSSA (72 aa)) is disordered. Positions 1192–1205 (SAPSASGASSANPS) are enriched in low complexity.

This sequence belongs to the CLU family. In terms of assembly, may associate with the eukaryotic translation initiation factor 3 (eIF-3) complex.

Its subcellular location is the cytoplasm. Its function is as follows. mRNA-binding protein involved in proper cytoplasmic distribution of mitochondria. In Aspergillus oryzae (strain ATCC 42149 / RIB 40) (Yellow koji mold), this protein is Clustered mitochondria protein homolog.